A 66-amino-acid polypeptide reads, in one-letter code: MAFLKKSLFLVLFLGLVSLSICEEEKRETEEKENEQEDDDKSEEKRFLSLIPHAINAVSAIAKHFG.

An N-terminal signal peptide occupies residues 1–22; the sequence is MAFLKKSLFLVLFLGLVSLSIC. Positions 23–44 are excised as a propeptide; the sequence is EEEKRETEEKENEQEDDDKSEE. Positions 24-45 are disordered; that stretch reads EEKRETEEKENEQEDDDKSEEK. Residues 31-41 show a composition bias toward acidic residues; that stretch reads EKENEQEDDDK. Phe65 carries the post-translational modification Phenylalanine amide.

Expressed by the skin glands.

Its subcellular location is the secreted. In terms of biological role, has antibacterial activity against the Gram-negative bacteria E.coli ATCC 11775 (MIC=7.2 uM), and the Gram-positive bacteria S.aureus ATCC 12600 (MIC=3.6 uM) and M.luteus ATCC 49732 (MIC=1.8 uM). Does not inhibit the growth of the fungus C.albicans. The chain is Phylloseptin-Az2 from Pithecopus azureus (Orange-legged monkey tree frog).